We begin with the raw amino-acid sequence, 161 residues long: Large ribosomal subunit protein eL21 (161 aa).

Belongs to the eukaryotic ribosomal protein eL21 family.

This Caenorhabditis elegans protein is Large ribosomal subunit protein eL21 (rpl-21).